Consider the following 194-residue polypeptide: MNKQKNNRERTPQPEQDTERDEQLTNSHENDIDSAPAAEENDKVADPVEQLTAQLAALNDTHLRLMAEYDNYRKRTLKEKSELIRNGGEKVLVDLLPVIDDFERALSNLGDMSEPAAIKEGVELIYSKFMDYLQKQGVKKIETADLPFDADLCDAVAMIPAPSAEQKGKVIDCVKTGYTLNDKVIRHAHVVVGE.

Basic and acidic residues predominate over residues methionine 1–proline 12. The tract at residues methionine 1–valine 44 is disordered.

This sequence belongs to the GrpE family. Homodimer.

The protein localises to the cytoplasm. In terms of biological role, participates actively in the response to hyperosmotic and heat shock by preventing the aggregation of stress-denatured proteins, in association with DnaK and GrpE. It is the nucleotide exchange factor for DnaK and may function as a thermosensor. Unfolded proteins bind initially to DnaJ; upon interaction with the DnaJ-bound protein, DnaK hydrolyzes its bound ATP, resulting in the formation of a stable complex. GrpE releases ADP from DnaK; ATP binding to DnaK triggers the release of the substrate protein, thus completing the reaction cycle. Several rounds of ATP-dependent interactions between DnaJ, DnaK and GrpE are required for fully efficient folding. The chain is Protein GrpE from Porphyromonas gingivalis (strain ATCC BAA-308 / W83).